A 657-amino-acid polypeptide reads, in one-letter code: Protein mono-ADP-ribosyltransferase TIPARP (657 aa).

Residues 1–10 are compositionally biased toward acidic residues; it reads MEVETTEPEP. Residues 1–22 are disordered; sequence MEVETTEPEPDCVVQPPSPSDD. At C39 the chain carries ADP-ribosylcysteine. Positions 41–48 match the Nuclear localization signal motif; sequence KKKQEQKR. The disordered stretch occupies residues 121 to 154; sequence QLPEAHPSTDAPEQGVPIQDHSFPPETISGTVAD. A C3H1-type zinc finger spans residues 238-265; that stretch reads ENGIEICMDFLQGTCIYGRDCLKHHTVL. A WWE domain is found at 333 to 411; sequence STPPCSNSNS…RRPLFRSCFI (79 aa). Residues 449-657 enclose the PARP catalytic domain; sequence YPETWVYMHP…YEEVSNTVSI (209 aa).

The protein belongs to the ARTD/PARP family. Interacts with AHR. In terms of processing, auto-mono-ADP-ribosylated. Ubiquitously expressed.

It localises to the nucleus. It catalyses the reaction L-aspartyl-[protein] + NAD(+) = 4-O-(ADP-D-ribosyl)-L-aspartyl-[protein] + nicotinamide. It carries out the reaction L-glutamyl-[protein] + NAD(+) = 5-O-(ADP-D-ribosyl)-L-glutamyl-[protein] + nicotinamide. The catalysed reaction is L-cysteinyl-[protein] + NAD(+) = S-(ADP-D-ribosyl)-L-cysteinyl-[protein] + nicotinamide + H(+). Its function is as follows. ADP-ribosyltransferase that mediates mono-ADP-ribosylation of glutamate, aspartate and cysteine residues on target proteins. Acts as a negative regulator of AHR by mediating mono-ADP-ribosylation of AHR, leading to inhibit transcription activator activity of AHR. The protein is Protein mono-ADP-ribosyltransferase TIPARP of Mus musculus (Mouse).